We begin with the raw amino-acid sequence, 320 residues long: Ferrochelatase (320 aa).

Positions 194 and 275 each coordinate Fe cation.

It belongs to the ferrochelatase family.

Its subcellular location is the cytoplasm. It carries out the reaction heme b + 2 H(+) = protoporphyrin IX + Fe(2+). It participates in porphyrin-containing compound metabolism; protoheme biosynthesis; protoheme from protoporphyrin-IX: step 1/1. In terms of biological role, catalyzes the ferrous insertion into protoporphyrin IX. The sequence is that of Ferrochelatase from Vibrio cholerae serotype O1 (strain ATCC 39315 / El Tor Inaba N16961).